Consider the following 387-residue polypeptide: 3-ketoacyl-CoA thiolase (387 aa).

The active-site Acyl-thioester intermediate is Cys91. Active-site proton acceptor residues include His343 and Cys373.

Belongs to the thiolase-like superfamily. Thiolase family. Heterotetramer of two alpha chains (FadB) and two beta chains (FadA).

It is found in the cytoplasm. It catalyses the reaction an acyl-CoA + acetyl-CoA = a 3-oxoacyl-CoA + CoA. The protein operates within lipid metabolism; fatty acid beta-oxidation. In terms of biological role, catalyzes the final step of fatty acid oxidation in which acetyl-CoA is released and the CoA ester of a fatty acid two carbons shorter is formed. The sequence is that of 3-ketoacyl-CoA thiolase from Escherichia coli O9:H4 (strain HS).